The sequence spans 184 residues: Large ribosomal subunit protein uL5 (184 aa).

This sequence belongs to the universal ribosomal protein uL5 family. As to quaternary structure, part of the 50S ribosomal subunit; part of the 5S rRNA/L5/L18/L25 subcomplex. Contacts the 5S rRNA and the P site tRNA. Forms a bridge to the 30S subunit in the 70S ribosome.

This is one of the proteins that bind and probably mediate the attachment of the 5S RNA into the large ribosomal subunit, where it forms part of the central protuberance. In the 70S ribosome it contacts protein S13 of the 30S subunit (bridge B1b), connecting the 2 subunits; this bridge is implicated in subunit movement. Contacts the P site tRNA; the 5S rRNA and some of its associated proteins might help stabilize positioning of ribosome-bound tRNAs. In Thermotoga sp. (strain RQ2), this protein is Large ribosomal subunit protein uL5.